The primary structure comprises 1025 residues: Dihydropyrimidine dehydrogenase [NADP(+)] (1025 aa).

The propeptide occupies 1 to 3 (MAP). One can recognise a 4Fe-4S ferredoxin-type 1 domain in the interval 69 to 100 (ERGALREAMRCLKCADAPCQKSCPTHLDIKSF). The [4Fe-4S] cluster site is built by Cys79, Cys82, Cys87, and Cys91. Val129 contributes to the FAD binding site. Residues Cys130, Cys136, Cys140, and Gln156 each coordinate [4Fe-4S] cluster. Residues 194-198 (GAGPA), 218-226 (EKQEYVGGL), Arg235, and Leu261 each bind FAD. Residues 340 to 343 (AGDT), 364 to 365 (RK), and Arg371 contribute to the NADP(+) site. Lys384 is subject to N6-acetyllysine. Residues 437-439 (AFG) and 481-487 (DIVGMAN) contribute to the NADP(+) site. 480-489 (GDIVGMANTT) contacts FAD. FMN-binding positions include Ser550 and 574–575 (KT). Residues Asn609 and 668–670 (NLS) each bind substrate. The active-site Proton acceptor is Cys671. Lys709 is a binding site for FMN. 736 to 737 (NT) is a binding site for substrate. FMN contacts are provided by residues Gly767, 793-795 (TGG), and 816-817 (CS). 4Fe-4S ferredoxin-type domains follow at residues 944–976 (VVAV…FDPE) and 978–1007 (HLPT…MVSR). Cys953, Cys956, Cys959, Cys963, Cys986, Cys989, Cys992, and Cys996 together coordinate [4Fe-4S] cluster.

This sequence belongs to the dihydropyrimidine dehydrogenase family. In terms of assembly, homodimer. FAD serves as cofactor. Requires FMN as cofactor. It depends on [4Fe-4S] cluster as a cofactor.

The protein resides in the cytoplasm. The enzyme catalyses 5,6-dihydrouracil + NADP(+) = uracil + NADPH + H(+). The catalysed reaction is 5,6-dihydrothymine + NADP(+) = thymine + NADPH + H(+). Its pathway is amino-acid biosynthesis; beta-alanine biosynthesis. Its activity is regulated as follows. Inactivated by 5-iodouracil. Involved in pyrimidine base degradation. Catalyzes the reduction of uracil and thymine. The chain is Dihydropyrimidine dehydrogenase [NADP(+)] (DPYD) from Sus scrofa (Pig).